The following is a 463-amino-acid chain: FAD-dependent monooxygenase ausM (463 aa).

Residues glutamate 40, glycine 54, and arginine 113 each contribute to the FAD site. The active site involves tyrosine 217. FAD-binding residues include aspartate 309 and alanine 322. A helical membrane pass occupies residues 443 to 463 (VPWLVISLPVLASVLCYLMFA).

It belongs to the paxM FAD-dependent monooxygenase family. FAD serves as cofactor.

It localises to the membrane. Its pathway is secondary metabolite biosynthesis; terpenoid biosynthesis. In terms of biological role, FAD-dependent monooxygenase; part of the gene cluster that mediates the biosynthesis of calidodehydroaustin, a fungal meroterpenoid. The first step of the pathway is the synthesis of 3,5-dimethylorsellinic acid by the polyketide synthase ausA. 3,5-dimethylorsellinic acid is then prenylated by the polyprenyl transferase ausN. Further epoxidation by the FAD-dependent monooxygenase ausM and cyclization by the probable terpene cyclase ausL lead to the formation of protoaustinoid A. Protoaustinoid A is then oxidized to spiro-lactone preaustinoid A3 by the combined action of the FAD-binding monooxygenases ausB and ausC, and the dioxygenase ausE. Acid-catalyzed keto-rearrangement and ring contraction of the tetraketide portion of preaustinoid A3 by ausJ lead to the formation of preaustinoid A4. The aldo-keto reductase ausK, with the help of ausH, is involved in the next step by transforming preaustinoid A4 into isoaustinone which is in turn hydroxylated by the P450 monooxygenase ausI to form austinolide. The cytochrome P450 monooxygenase ausG modifies austinolide to austinol. Austinol is further acetylated to austin by the O-acetyltransferase ausP, which spontaneously changes to dehydroaustin. The cytochrome P450 monooxygenase ausR then converts dehydroaustin is into 7-dehydrodehydroaustin. The hydroxylation catalyzed by ausR permits the O-acetyltransferase ausQ to add an additional acetyl group to the molecule, leading to the formation of acetoxydehydroaustin. The short chain dehydrogenase ausT catalyzes the reduction of the double bond present between carbon atoms 1 and 2 to convert 7-dehydrodehydroaustin into 1,2-dihydro-7-hydroxydehydroaustin. AusQ catalyzes not only an acetylation reaction but also the addition of the PKS ausV diketide product to 1,2-dihydro-7-hydroxydehydroaustin, forming precalidodehydroaustin. Finally, the iron/alpha-ketoglutarate-dependent dioxygenase converts precalidodehydroaustin into calidodehydroaustin. This Aspergillus calidoustus protein is FAD-dependent monooxygenase ausM.